The sequence spans 529 residues: Bifunctional purine biosynthesis protein PurH (529 aa).

The MGS-like domain maps to 1–148 (MQQRRPVRRA…KNHKDVAIVV (148 aa)). Residue Lys287 is modified to N6-acetyllysine.

Belongs to the PurH family.

The enzyme catalyses (6R)-10-formyltetrahydrofolate + 5-amino-1-(5-phospho-beta-D-ribosyl)imidazole-4-carboxamide = 5-formamido-1-(5-phospho-D-ribosyl)imidazole-4-carboxamide + (6S)-5,6,7,8-tetrahydrofolate. It carries out the reaction IMP + H2O = 5-formamido-1-(5-phospho-D-ribosyl)imidazole-4-carboxamide. Its pathway is purine metabolism; IMP biosynthesis via de novo pathway; 5-formamido-1-(5-phospho-D-ribosyl)imidazole-4-carboxamide from 5-amino-1-(5-phospho-D-ribosyl)imidazole-4-carboxamide (10-formyl THF route): step 1/1. It functions in the pathway purine metabolism; IMP biosynthesis via de novo pathway; IMP from 5-formamido-1-(5-phospho-D-ribosyl)imidazole-4-carboxamide: step 1/1. This chain is Bifunctional purine biosynthesis protein PurH, found in Escherichia coli O6:H1 (strain CFT073 / ATCC 700928 / UPEC).